A 37-amino-acid chain; its full sequence is Lambda-hexatoxin-Hv1c (37 aa).

4 cysteine pairs are disulfide-bonded: Cys-3-Cys-17, Cys-10-Cys-22, Cys-13-Cys-14, and Cys-16-Cys-32.

Belongs to the neurotoxin 11 (kappa toxin) family. Expressed by the venom gland.

It localises to the secreted. Its function is as follows. This excitatory toxin inhibits insect calcium-activated potassium (KCa) channels (Slo-type). Pan-neuronal expression in Drosophila is lethal but flies engineered to express the toxin only in clock neurons have defects in circadian rhythm but a normal lifespan. The sequence is that of Lambda-hexatoxin-Hv1c from Hadronyche versuta (Blue mountains funnel-web spider).